Here is a 737-residue protein sequence, read N- to C-terminus: Polyribonucleotide nucleotidyltransferase (737 aa).

The Mg(2+) site is built by Asp489 and Asp495. Positions 556-615 (PKIDTIKIDVDKIKIVIGKGGETIDKIIAETGVKIDIDEEGNVSIYSSDQDAINRAKEII) constitute a KH domain. One can recognise an S1 motif domain in the interval 625 to 693 (DEVYRAKVVR…EKGRIDASMK (69 aa)). Residues 691-737 (SMKALLPRPPKPEHDEKGEKSERPHRPRHQKDYKPKKEFTETSKDSE) form a disordered region. Positions 700–737 (PKPEHDEKGEKSERPHRPRHQKDYKPKKEFTETSKDSE) are enriched in basic and acidic residues.

The protein belongs to the polyribonucleotide nucleotidyltransferase family. It depends on Mg(2+) as a cofactor.

The protein localises to the cytoplasm. It catalyses the reaction RNA(n+1) + phosphate = RNA(n) + a ribonucleoside 5'-diphosphate. Involved in mRNA degradation. Catalyzes the phosphorolysis of single-stranded polyribonucleotides processively in the 3'- to 5'-direction. The sequence is that of Polyribonucleotide nucleotidyltransferase from Streptococcus pneumoniae serotype 4 (strain ATCC BAA-334 / TIGR4).